The sequence spans 231 residues: Large ribosomal subunit protein uL1 (231 aa).

This sequence belongs to the universal ribosomal protein uL1 family. In terms of assembly, part of the 50S ribosomal subunit.

In terms of biological role, binds directly to 23S rRNA. The L1 stalk is quite mobile in the ribosome, and is involved in E site tRNA release. Its function is as follows. Protein L1 is also a translational repressor protein, it controls the translation of the L11 operon by binding to its mRNA. The sequence is that of Large ribosomal subunit protein uL1 from Ralstonia pickettii (strain 12J).